The primary structure comprises 1456 residues: Ig-like and fibronectin type-III domain-containing protein C27B7.7 (1456 aa).

An N-terminal signal peptide occupies residues 1–16 (MISLSLVLLLLFGVRC). 2 Fibronectin type-III domains span residues 24–128 (NDDS…SINT) and 132–227 (IPKA…TNST). Asparagine 64, asparagine 146, asparagine 164, asparagine 198, and asparagine 225 each carry an N-linked (GlcNAc...) asparagine glycan. The region spanning 236–322 (PDEEYTADPQ…DAGDSSKEVN (87 aa)) is the Ig-like 1 domain. Residues cysteine 254 and cysteine 308 are joined by a disulfide bond. Residues 328–426 (PGSPPSEITL…VAMERDTQPI (99 aa)) form the Fibronectin type-III 3 domain. Asparagine 471, asparagine 497, and asparagine 517 each carry an N-linked (GlcNAc...) asparagine glycan. 3 Fibronectin type-III domains span residues 531–631 (APTQ…TLNG), 636–736 (PPDN…TAYS), and 737–846 (EVPI…WFRT). Asparagine 658, asparagine 691, and asparagine 692 each carry an N-linked (GlcNAc...) asparagine glycan. The Ig-like 2 domain occupies 841–948 (PRWFRTGHGK…GSSSASVEIR (108 aa)). Cysteines 877 and 932 form a disulfide. Asparagine 893, asparagine 898, asparagine 969, asparagine 1091, asparagine 1120, asparagine 1133, asparagine 1151, asparagine 1207, asparagine 1268, asparagine 1277, asparagine 1298, asparagine 1350, asparagine 1357, and asparagine 1382 each carry an N-linked (GlcNAc...) asparagine glycan. A Fibronectin type-III 7 domain is found at 955-1050 (PPENIILTAY…SCISDVLYET (96 aa)). 3 consecutive Fibronectin type-III domains span residues 1148–1234 (APTN…TPNG), 1236–1343 (PKTA…ISFD), and 1347–1438 (VIDN…SSPS). A disordered region spans residues 1419–1456 (LGRESPPSEEIDLEFISSPSPTPIISGSRRKVIKEPPL). Over residues 1434–1445 (ISSPSPTPIISG) the composition is skewed to low complexity.

It is found in the secreted. This chain is Ig-like and fibronectin type-III domain-containing protein C27B7.7, found in Caenorhabditis elegans.